A 367-amino-acid chain; its full sequence is Germination protease (367 aa).

Residues 1-15 constitute a propeptide that is removed on maturation; that stretch reads MKEPLDLSKYSVRTD.

This sequence belongs to the peptidase A25 family. Homotetramer. Post-translationally, autoproteolytically processed. The inactive tetrameric zymogen termed p46 autoprocesses to a smaller form termed p41, which is active only during spore germination.

It carries out the reaction Endopeptidase action with P4 Glu or Asp, P1 preferably Glu &gt; Asp, P1' hydrophobic and P2' Ala.. In terms of biological role, initiates the rapid degradation of small, acid-soluble proteins during spore germination. The chain is Germination protease from Bacillus cereus (strain G9842).